Here is a 119-residue protein sequence, read N- to C-terminus: Large ribosomal subunit protein uL18 (119 aa).

This sequence belongs to the universal ribosomal protein uL18 family. Part of the 50S ribosomal subunit; part of the 5S rRNA/L5/L18/L25 subcomplex. Contacts the 5S and 23S rRNAs.

In terms of biological role, this is one of the proteins that bind and probably mediate the attachment of the 5S RNA into the large ribosomal subunit, where it forms part of the central protuberance. The polypeptide is Large ribosomal subunit protein uL18 (Tropheryma whipplei (strain TW08/27) (Whipple's bacillus)).